The primary structure comprises 454 residues: NADP-specific glutamate dehydrogenase 1 (454 aa).

Ser-2 bears the N-acetylserine mark. The active site involves Lys-110. 174–203 contributes to the NAD(+) binding site; sequence GVLTGKGLNWGGSLIRPEATGYGLVYYTQA. Glycyl lysine isopeptide (Lys-Gly) (interchain with G-Cter in ubiquitin) cross-links involve residues Lys-325, Lys-371, and Lys-433.

Belongs to the Glu/Leu/Phe/Val dehydrogenases family. Homohexamer.

It carries out the reaction L-glutamate + NADP(+) + H2O = 2-oxoglutarate + NH4(+) + NADPH + H(+). Catalyzes the incorporation of an ammonium ion into alpha-ketoglutarate to form L-glutamate, the major route of assimilation of ammonia into an organic form in yeast. This chain is NADP-specific glutamate dehydrogenase 1, found in Saccharomyces cerevisiae (strain ATCC 204508 / S288c) (Baker's yeast).